A 129-amino-acid polypeptide reads, in one-letter code: Follitropin subunit beta (129 aa).

Positions Met1 to Cys18 are cleaved as a signal peptide. Intrachain disulfides connect Cys21–Cys69, Cys35–Cys84, Cys38–Cys122, Cys46–Cys100, Cys50–Cys102, and Cys105–Cys112. N-linked (GlcNAc...) asparagine glycosylation is found at Asn25 and Asn42.

The protein belongs to the glycoprotein hormones subunit beta family. In terms of assembly, heterodimer. The active follitropin is a heterodimer composed of an alpha chain/CGA shared with other hormones and a unique beta chain/FSHB shown here.

It localises to the secreted. Together with the alpha chain CGA constitutes follitropin, the follicle-stimulating hormone, and provides its biological specificity to the hormone heterodimer. Binds FSHR, a G protein-coupled receptor, on target cells to activate downstream signaling pathways. Follitropin is involved in follicle development and spermatogenesis in reproductive organs. This chain is Follitropin subunit beta (FSHB), found in Homo sapiens (Human).